A 125-amino-acid chain; its full sequence is Holo-[acyl-carrier-protein] synthase (125 aa).

2 residues coordinate Mg(2+): Asp8 and Glu57.

It belongs to the P-Pant transferase superfamily. AcpS family. The cofactor is Mg(2+).

The protein localises to the cytoplasm. It carries out the reaction apo-[ACP] + CoA = holo-[ACP] + adenosine 3',5'-bisphosphate + H(+). Its function is as follows. Transfers the 4'-phosphopantetheine moiety from coenzyme A to a Ser of acyl-carrier-protein. This is Holo-[acyl-carrier-protein] synthase from Geotalea daltonii (strain DSM 22248 / JCM 15807 / FRC-32) (Geobacter daltonii).